Here is a 132-residue protein sequence, read N- to C-terminus: Ribosome-binding factor A (132 aa).

Belongs to the RbfA family. As to quaternary structure, monomer. Binds 30S ribosomal subunits, but not 50S ribosomal subunits or 70S ribosomes.

Its subcellular location is the cytoplasm. One of several proteins that assist in the late maturation steps of the functional core of the 30S ribosomal subunit. Associates with free 30S ribosomal subunits (but not with 30S subunits that are part of 70S ribosomes or polysomes). Required for efficient processing of 16S rRNA. May interact with the 5'-terminal helix region of 16S rRNA. The polypeptide is Ribosome-binding factor A (Pseudomonas entomophila (strain L48)).